A 255-amino-acid polypeptide reads, in one-letter code: tRNA (guanine-N(1)-)-methyltransferase (255 aa).

S-adenosyl-L-methionine-binding positions include Gly-117 and 137-142 (LGDFVL).

This sequence belongs to the RNA methyltransferase TrmD family. Homodimer.

Its subcellular location is the cytoplasm. The catalysed reaction is guanosine(37) in tRNA + S-adenosyl-L-methionine = N(1)-methylguanosine(37) in tRNA + S-adenosyl-L-homocysteine + H(+). Its function is as follows. Specifically methylates guanosine-37 in various tRNAs. The chain is tRNA (guanine-N(1)-)-methyltransferase from Paraburkholderia phytofirmans (strain DSM 17436 / LMG 22146 / PsJN) (Burkholderia phytofirmans).